Here is a 451-residue protein sequence, read N- to C-terminus: Serine/threonine-protein phosphatase 2A 55 kDa regulatory subunit B delta isoform (451 aa).

7 WD repeats span residues 30-69, 95-136, 179-217, 228-268, 287-325, 342-383, and 418-451; these read AEAD…KSRP, EIEE…KRAE, AHTY…RSFN, ELTE…LCDR, EIIS…RPVE, ENDC…DITL, and DFNK…DKIN.

This sequence belongs to the phosphatase 2A regulatory subunit B family. In terms of assembly, PP2A consists of a common heterodimeric core enzyme, composed of a 36 kDa catalytic subunit (subunit C) and a 65 kDa constant regulatory subunit (PR65 or subunit A), that associates with a variety of regulatory subunits.

Its subcellular location is the cytoplasm. Substrate-recognition subunit of protein phosphatase 2A (PP2A) that plays a key role in cell cycle by controlling mitosis entry and exit. The activity of PP2A complexes containing PPP2R2D (PR55-delta) fluctuate during the cell cycle: the activity is high in interphase and low in mitosis. The sequence is that of Serine/threonine-protein phosphatase 2A 55 kDa regulatory subunit B delta isoform (PPP2R2D) from Gallus gallus (Chicken).